We begin with the raw amino-acid sequence, 310 residues long: Olfactory receptor 8B8 (310 aa).

The Extracellular segment spans residues 1-27 (MATENASVPEFILAGLTDQPGLRMPLF). Residue Asn-5 is glycosylated (N-linked (GlcNAc...) asparagine). The helical transmembrane segment at 28–48 (FLFLGFYMVTMVGNLGLITLI) threads the bilayer. At 49–55 (GLNSHLH) the chain is on the cytoplasmic side. Residues 56-76 (TPMYFFLFNLSLIDFCYSTVI) form a helical membrane-spanning segment. At 77–98 (TPKMLVSFVSKKNIISYSGCMT) the chain is on the extracellular side. Residues Cys-96 and Cys-188 are joined by a disulfide bond. The chain crosses the membrane as a helical span at residues 99–119 (QLFFFLFFVVSESFILSAMAY). The Cytoplasmic segment spans residues 120–140 (DRYVAICNPLMYTVTMSPQVC). Residues 141–161 (LLLLLGVYVMGFAGAMAHTAF) form a helical membrane-spanning segment. At 162-195 (MVKLTFCADKLVNHYMCDILPLLERSCTSTYVNE) the chain is on the extracellular side. A helical transmembrane segment spans residues 196–216 (LVVFIVVGIDIGVPTVTIFIS). The Cytoplasmic segment spans residues 217-238 (YALILSSILRISSTEGRSKAFS). A helical transmembrane segment spans residues 239–259 (TCSSHIIAVSLFFGSGAFMYL). Topologically, residues 260 to 270 (KPSSLLPMNQG) are extracellular. Residues 271–291 (KVSSLFYTIVVPMLNPLIYSL) form a helical membrane-spanning segment. Residues 292–310 (RNKDVKVALRKTLSRSSFS) lie on the Cytoplasmic side of the membrane.

It belongs to the G-protein coupled receptor 1 family.

It localises to the cell membrane. In terms of biological role, odorant receptor. This chain is Olfactory receptor 8B8, found in Mus musculus (Mouse).